The following is a 98-amino-acid chain: Small ribosomal subunit protein uS17 (98 aa).

Positions 1–21 are disordered; it reads MADQKGPKYTPAAEKPRGRRK. Lys-96 is covalently cross-linked (Isoglutamyl lysine isopeptide (Lys-Gln) (interchain with Q-Cter in protein Pup)).

This sequence belongs to the universal ribosomal protein uS17 family. As to quaternary structure, part of the 30S ribosomal subunit.

In terms of biological role, one of the primary rRNA binding proteins, it binds specifically to the 5'-end of 16S ribosomal RNA. In Mycolicibacterium smegmatis (strain ATCC 700084 / mc(2)155) (Mycobacterium smegmatis), this protein is Small ribosomal subunit protein uS17 (rpsQ).